Reading from the N-terminus, the 340-residue chain is Probable peroxidase 61 (340 aa).

The N-terminal stretch at 1 to 25 (MQFVNFFPLLALVVISLAGKATVEA) is a signal peptide. 4 disulfides stabilise this stretch: Cys-46-Cys-122, Cys-79-Cys-84, Cys-128-Cys-331, and Cys-205-Cys-237. N-linked (GlcNAc...) asparagine glycosylation is present at Asn-63. The active site involves Arg-73. Residues Asp-78, Val-81, Gly-83, Asp-85, and Ser-87 each coordinate Ca(2+). Pro-168 provides a ligand contact to substrate. His-198 is a binding site for heme b. Ca(2+) is bound at residue Ser-199. Residue Asn-226 is glycosylated (N-linked (GlcNAc...) asparagine). Residues Asp-255 and Ser-258 each coordinate Ca(2+).

The protein belongs to the peroxidase family. Classical plant (class III) peroxidase subfamily. It depends on heme b as a cofactor. Ca(2+) is required as a cofactor.

The protein resides in the secreted. It carries out the reaction 2 a phenolic donor + H2O2 = 2 a phenolic radical donor + 2 H2O. Removal of H(2)O(2), oxidation of toxic reductants, biosynthesis and degradation of lignin, suberization, auxin catabolism, response to environmental stresses such as wounding, pathogen attack and oxidative stress. The enzyme activity has to be proved. The sequence is that of Probable peroxidase 61 (PER61) from Arabidopsis thaliana (Mouse-ear cress).